We begin with the raw amino-acid sequence, 200 residues long: MESQSRRRRPLRRPETLVQGEAAESDSDLSASSSEEEELYLGPSGPTRGRPTGLRVAGEAAETDSDPEPEPKAAPRDLPPLVVQRETAGEAWAEEEAPAPAPARSLLQLRLAESQARLDHDVAAAVSGVYRRAGRDVAALAGRLAAAQAAGLAAAHSVRLARGDLCALAERLDIVASCRLLPDIRGVPGTEPEQDPGPRA.

The segment covering 1–11 (MESQSRRRRPL) has biased composition (basic residues). The disordered stretch occupies residues 1–81 (MESQSRRRRP…KAAPRDLPPL (81 aa)). Over residues 41 to 55 (LGPSGPTRGRPTGLR) the composition is skewed to low complexity. Thr-63 carries the post-translational modification Phosphothreonine. Ser-65 is subject to Phosphoserine.

This sequence belongs to the BLOC1S3 family. Component of the biogenesis of lysosome-related organelles complex 1 (BLOC-1) composed of BLOC1S1, BLOC1S2, BLOC1S3, BLOC1S4, BLOC1S5, BLOC1S6, DTNBP1/BLOC1S7 and SNAPIN/BLOC1S8. Octamer composed of one copy each BLOC1S1, BLOC1S2, BLOC1S3, BLOC1S4, BLOC1S5, BLOC1S6, DTNBP1/BLOC1S7 and SNAPIN/BLOC1S8. The BLOC-1 complex associates with the AP-3 protein complex and membrane protein cargos. Interacts directly with BLOC1S2. Interacts with BLOC1S4, BLOC1S5 and BLOC1S6. Post-translationally, phosphorylated.

It localises to the cytoplasm. In terms of biological role, component of the BLOC-1 complex, a complex that is required for normal biogenesis of lysosome-related organelles (LRO), such as platelet dense granules and melanosomes. In concert with the AP-3 complex, the BLOC-1 complex is required to target membrane protein cargos into vesicles assembled at cell bodies for delivery into neurites and nerve terminals. The BLOC-1 complex, in association with SNARE proteins, is also proposed to be involved in neurite extension. Plays a role in intracellular vesicle trafficking. The polypeptide is Biogenesis of lysosome-related organelles complex 1 subunit 3 (BLOC1S3) (Bos taurus (Bovine)).